A 474-amino-acid polypeptide reads, in one-letter code: Glycogen synthase (474 aa).

Lysine 12 contacts ADP-alpha-D-glucose.

This sequence belongs to the glycosyltransferase 1 family. Bacterial/plant glycogen synthase subfamily.

It catalyses the reaction [(1-&gt;4)-alpha-D-glucosyl](n) + ADP-alpha-D-glucose = [(1-&gt;4)-alpha-D-glucosyl](n+1) + ADP + H(+). Its pathway is glycan biosynthesis; glycogen biosynthesis. Its function is as follows. Synthesizes alpha-1,4-glucan chains using ADP-glucose. The polypeptide is Glycogen synthase (Xanthomonas axonopodis pv. citri (strain 306)).